The following is a 609-amino-acid chain: Dynamin-like protein 2 (609 aa).

The segment at 1–16 (MQINLLNDFIKAYENT) is inserts into assembly domain of DLP1, required for tetramerization. The segment at 17 to 25 (YSVSFDDSF) is linker. One can recognise a Dynamin-type G domain in the interval 63–310 (NIAIIGQFSS…FVGIFDRLLN (248 aa)). The G1 motif stretch occupies residues 68 to 75 (GQFSSGKS). 72–76 (SGKSS) serves as a coordination point for GDP. The segment at 93–95 (PVT) is G2 motif. A G3 motif region spans residues 158 to 161 (DTPG). A G4 motif region spans residues 216 to 219 (NQKD).

It belongs to the TRAFAC class dynamin-like GTPase superfamily. Dynamin/Fzo/YdjA family. As to quaternary structure, forms a 2:2 heterotetramer with DLP1. DLP2 forms a central back-to-back dimer flanked on each side by a DLP1 subunit. In the crystal structures the 2 DLP1 subunits are in very different conformations.

It localises to the cytoplasm. The protein resides in the cytosol. It carries out the reaction GTP + H2O = GDP + phosphate + H(+). Its function is as follows. The heterotetrameric DLP1(2)-DLP2(2) complex tethers liposomes and may mediate their fusion. Initial binding is probably mediated by DLP1, while DLP2 couples DLP1 subunits and increases the effective reach of the complex up to 45 nm. The role of the nucleotide is unknown. This subunit alone very weakly binds to liposomes; GTP, GDP, GMPPCP and GMPPNP do not change heterotetramer binding. Tetramerization is required for GTPase activity, suggesting the GTPase domains (dynamin-type G) from DLP1 and DLP2 must dimerize to reconstitute the GTPase active site. The polypeptide is Dynamin-like protein 2 (Campylobacter jejuni subsp. jejuni serotype O:23/36 (strain 81-176)).